A 357-amino-acid polypeptide reads, in one-letter code: Serine proteinase inhibitor 1 (357 aa).

It belongs to the serpin family. Poxviruses subfamily.

The protein resides in the host cytoplasm. In terms of biological role, this viral protein may be involved in the regulation of the complement cascade. Involved in red pock formation. The polypeptide is Serine proteinase inhibitor 1 (SPI-1) (Oryctolagus cuniculus (Rabbit)).